The following is an 87-amino-acid chain: Small ribosomal subunit protein bS20 (87 aa).

The segment covering 1–15 (MANTRSAKKMVRKIA) has biased composition (basic residues). Disordered regions lie at residues 1–22 (MANT…DVNK) and 64–87 (KGVT…KAMA).

The protein belongs to the bacterial ribosomal protein bS20 family.

Its function is as follows. Binds directly to 16S ribosomal RNA. This is Small ribosomal subunit protein bS20 from Hyphomonas neptunium (strain ATCC 15444).